The sequence spans 505 residues: MEEFQGHRELDRSWQHNFLYPLIFQEYIYTXAYDNGLNKLILLENGVDQKYSLLTVKRLITRLYQQNHLILSANDSNQNEIFGHKHKKNLYLQMITEGFAVIVEIPFSLLLISSLDGKEKKIVKSPNLQSIHSIFPFLEDKFLYLNYVLDILIPYPAHLEILVQTLRYWLKDASSLHLLRFFFYECRNWTSRITSKESISFLKTRNRRLFLFLYNFYVCEYESFFVILRNQSSYLRSTSFGALLERIHFYGKFKYLVKVKACAVILCFFKEPFPHYVRYQGKALLASKGTSLLMHKWKYYFISFWQCYFSVWSQPRRIYINQLSNYSLDFMGFLSSVRFNSSVIRSQMLENSFLLENIRNKFDPIVPISPLVGSLAKSKFCNVLGHPIGKSVWTDLSDSDIIDRFGRICRNLSHYYSGSSRKKNLYRIKYILRLSCARTLSRKHKSTVRAFLKRLGSEFLEEFFTEEEKVLSLILPRDSSTSGGLYKGRVWYLDIICIHNLVNDQ.

It belongs to the intron maturase 2 family. MatK subfamily.

The protein resides in the plastid. It localises to the chloroplast. Functionally, usually encoded in the trnK tRNA gene intron. Probably assists in splicing its own and other chloroplast group II introns. This chain is Maturase K, found in Gomphrena pulchella (Globe amaranth).